The primary structure comprises 169 residues: Endoribonuclease YbeY (169 aa).

Residues His-130, His-134, and His-140 each contribute to the Zn(2+) site.

This sequence belongs to the endoribonuclease YbeY family. The cofactor is Zn(2+).

It is found in the cytoplasm. Single strand-specific metallo-endoribonuclease involved in late-stage 70S ribosome quality control and in maturation of the 3' terminus of the 16S rRNA. The protein is Endoribonuclease YbeY of Neisseria meningitidis serogroup B (strain ATCC BAA-335 / MC58).